The primary structure comprises 239 residues: Ribonuclease P protein component 3 (239 aa).

Belongs to the eukaryotic/archaeal RNase P protein component 3 family. As to quaternary structure, consists of a catalytic RNA component and at least 4-5 protein subunits.

The protein localises to the cytoplasm. The enzyme catalyses Endonucleolytic cleavage of RNA, removing 5'-extranucleotides from tRNA precursor.. Functionally, part of ribonuclease P, a protein complex that generates mature tRNA molecules by cleaving their 5'-ends. The polypeptide is Ribonuclease P protein component 3 (Methanosarcina mazei (strain ATCC BAA-159 / DSM 3647 / Goe1 / Go1 / JCM 11833 / OCM 88) (Methanosarcina frisia)).